The following is a 668-amino-acid chain: mRNA cap guanine-N(7) methyltransferase (668 aa).

A compositionally biased stretch (basic and acidic residues) spans 1-19 (MYDPARDSWEERDGDEARS). The disordered stretch occupies residues 1 to 281 (MYDPARDSWE…RAQVEEAMRA (281 aa)). Residues 44–65 (GENNNTTDLQQHPDPSSKTTAS) are compositionally biased toward polar residues. Residues 73–88 (SQPAQPTTQTPPSVST) show a composition bias toward low complexity. Polar residues predominate over residues 100 to 129 (KASNPQSLTSTAQNQLNKSNTTMENTSGSA). A compositionally biased stretch (basic and acidic residues) spans 133–142 (PRADPSDKPN). Positions 148–157 (ASPTDQNGSQ) are enriched in polar residues. Positions 257 to 279 (LVDRETLRRRQEERERAQVEEAM) are enriched in basic and acidic residues. In terms of domain architecture, mRNA cap 0 methyltransferase spans 310–668 (SKIKGLRSFN…FYHAFCFYKV (359 aa)). 319–320 (NN) contacts mRNA. S-adenosyl-L-methionine is bound by residues Lys323, Gly366, Asp390, Asp428, 471–473 (MFT), and Tyr476. The interval 524–547 (ARQAQAKKEKSDEAPEDGEVEEDD) is disordered. The segment covering 537–547 (APEDGEVEEDD) has biased composition (acidic residues).

It belongs to the class I-like SAM-binding methyltransferase superfamily. mRNA cap 0 methyltransferase family.

The protein localises to the nucleus. It carries out the reaction a 5'-end (5'-triphosphoguanosine)-ribonucleoside in mRNA + S-adenosyl-L-methionine = a 5'-end (N(7)-methyl 5'-triphosphoguanosine)-ribonucleoside in mRNA + S-adenosyl-L-homocysteine. Its function is as follows. Responsible for methylating the 5'-cap structure of mRNAs. This chain is mRNA cap guanine-N(7) methyltransferase (abd1), found in Aspergillus fumigatus (strain ATCC MYA-4609 / CBS 101355 / FGSC A1100 / Af293) (Neosartorya fumigata).